Here is a 278-residue protein sequence, read N- to C-terminus: MQYEIVSAGEDVDDERARGRRAAAPAAPSSAVPSSAALSSAALSSAARPTGAPPATAAARRGRDLPRERLLARGPAALSDAELVALLLGSGLPGHDVFALAHTLLARFGSLRALLDAAPDDFKGLRGIGPARTAILVAVVELARRALAEKARERPLVDSPGAVDDYLRLLIGTRPREVFVCLFLDARHRLVQTEETAHGSLTRMAVYPREIVRRALALNAAALIVAHNHPSGAVRPSAADRRLTRVLRDALALVDIKLIDHFVVGASDTFSFAQAGWI.

Residues 1-64 (MQYEIVSAGE…ATAAARRGRD (64 aa)) form a disordered region. Residues 22 to 59 (AAAPAAPSSAVPSSAALSSAALSSAARPTGAPPATAAA) show a composition bias toward low complexity. Positions 156-278 (LVDSPGAVDD…TFSFAQAGWI (123 aa)) constitute an MPN domain. His227, His229, and Asp240 together coordinate Zn(2+). The short motif at 227-240 (HNHPSGAVRPSAAD) is the JAMM motif element.

The protein belongs to the UPF0758 family.

The protein is UPF0758 protein BURPS668_0979 of Burkholderia pseudomallei (strain 668).